Consider the following 249-residue polypeptide: 2,3-bisphosphoglycerate-dependent phosphoglycerate mutase (249 aa).

Substrate-binding positions include 9-16 (RHGQSQWN), 22-23 (TG), Arg-61, 88-91 (ERHY), Lys-99, 115-116 (RR), and 184-185 (GN). His-10 serves as the catalytic Tele-phosphohistidine intermediate. The active-site Proton donor/acceptor is the Glu-88.

The protein belongs to the phosphoglycerate mutase family. BPG-dependent PGAM subfamily. In terms of assembly, homodimer.

The catalysed reaction is (2R)-2-phosphoglycerate = (2R)-3-phosphoglycerate. Its pathway is carbohydrate degradation; glycolysis; pyruvate from D-glyceraldehyde 3-phosphate: step 3/5. Functionally, catalyzes the interconversion of 2-phosphoglycerate and 3-phosphoglycerate. In Xanthomonas oryzae pv. oryzae (strain MAFF 311018), this protein is 2,3-bisphosphoglycerate-dependent phosphoglycerate mutase.